The chain runs to 372 residues: Putative KilA-N domain-containing protein L32 (372 aa).

A compositionally biased stretch (basic residues) spans 1 to 12 (MPHKAPKSKLFR). The disordered stretch occupies residues 1-129 (MPHKAPKSKL…SDNDKSKDNF (129 aa)). Residues 14 to 36 (RYVEDSDDETRGRSRNRSVEKSR) show a composition bias toward basic and acidic residues. Residues 37 to 53 (SKSLTRSKSKSPKKSRS) show a composition bias toward basic residues. Residues 79 to 120 (EDSEDSEDSESDQDDDKSDNEQSDSELDDSESDDDETDDNES) are compositionally biased toward acidic residues. Positions 151–255 (KFAIGKFGDF…IKIGEWIEEW (105 aa)) constitute a KilA-N domain.

The protein is Putative KilA-N domain-containing protein L32 of Acanthamoeba polyphaga (Amoeba).